Consider the following 761-residue polypeptide: T-box protein 1 (761 aa).

Disordered regions lie at residues 1–85 (MLGR…QPLT) and 167–210 (QTDP…CSSP). Composition is skewed to polar residues over residues 37 to 61 (DLQN…NQAG) and 167 to 179 (QTDP…FPQA). 2 stretches are compositionally biased toward low complexity: residues 180–191 (SPSDLSTTSSQS) and 198–210 (SSPS…CSSP). Positions 287–456 (LWRKFHEHRT…HNPFAKGFRD (170 aa)) form a DNA-binding region, T-box. Residues 496-510 (TTGFPCQTNPTQRSN) show a composition bias toward polar residues. Disordered regions lie at residues 496-515 (TTGF…QHEG), 545-612 (SGDA…TPAH), and 637-687 (VCSS…LLTT). A compositionally biased stretch (basic and acidic residues) spans 600–612 (GCERSNEKHTPAH). A compositionally biased stretch (polar residues) spans 637–646 (VCSSDNSNPD). Residues 656 to 687 (SPAGSGSPSVTSGTSLFTSGSSAAPSPPLLTT) show a composition bias toward low complexity.

The protein localises to the nucleus. Probable transcriptional regulator involved in developmental processes. In Patiria pectinifera (Starfish), this protein is T-box protein 1 (tbr1).